A 178-amino-acid polypeptide reads, in one-letter code: FXYD domain-containing ion transport regulator 5 (178 aa).

The first 21 residues, 1–21 (MSLSSRLCLLTIVALILPSRG), serve as a signal peptide directing secretion. Residues 21-59 (GQTPKKPTSIFTADQTSATTRDNVPDPDQTSPGVQTTPL) are compositionally biased toward polar residues. Residues 21–130 (GQTPKKPTSI…SYIEHPLDSN (110 aa)) are disordered. At 22–145 (QTPKKPTSIF…YYDDTTLRKR (124 aa)) the chain is on the extracellular side. Over residues 67–79 (TGSQTAAQTETQQ) the composition is skewed to low complexity. The span at 80–100 (LTKMATSNPVSDPGPHTSSKK) shows a compositional bias: polar residues. A helical membrane pass occupies residues 146–166 (GLLVAAVLFITGIIILTSGKC). The Cytoplasmic segment spans residues 167-178 (RQLSQFCLNRHR).

Belongs to the FXYD family. In terms of assembly, regulatory subunit of the sodium/potassium-transporting ATPase which is composed of a catalytic alpha subunit, a non-catalytic beta subunit and an additional regulatory subunit. The regulatory subunit, a member of the FXYD protein family, modulates the enzymatic activity in a tissue- and isoform-specific way by changing affinities of the Na+/K+-ATPase toward Na(+), K(+) or ATP. Post-translationally, glycosylated. In terms of tissue distribution, expressed mainly in epithelial tissue, such as lung, intestine and kidney. Not detected in brain, liver, muscle, and heart.

The protein resides in the cell membrane. The protein localises to the basolateral cell membrane. In terms of biological role, associates with and regulates the activity of the sodium/potassium-transporting ATPase (NKA) which catalyzes the hydrolysis of ATP coupled with the exchange of Na(+) and K(+) ions across the plasma membrane. May increase NKA activity by increasing the apparent affinity for Na(+). Involved in down-regulation of E-cadherin which results in reduced cell adhesion. Promotes metastasis. This Mus musculus (Mouse) protein is FXYD domain-containing ion transport regulator 5 (Fxyd5).